Consider the following 528-residue polypeptide: Na(+)/H(+) antiporter NhaB (528 aa).

The next 10 helical transmembrane spans lie at 25-47 (IISFLVINPIVFYFNPFIAGWLL), 66-86 (PGGLLAIEAVAIGMTSPSQVL), 97-117 (LLLVFMVAGIYFMKQLLLFVF), 130-164 (VSLLFCVSSAFLSAFLDALTVIAVIITVAVGFYSI), 241-261 (IRMSPVTVPVFFAGVTTCFLV), 304-324 (AFIGVWLIAGLALHLASVGLI), 351-371 (ALPFTALLAVFFAIVAVIIDL), 390-410 (LVVFYIANGLLSMVSDNVFVG), 448-468 (ATPNGQAAFLFLLTSAIAPLI), and 476-496 (VWMALPYTIVLSIVGVLAIQL).

This sequence belongs to the NhaB Na(+)/H(+) (TC 2.A.34) antiporter family.

The protein resides in the cell inner membrane. The enzyme catalyses 2 Na(+)(in) + 3 H(+)(out) = 2 Na(+)(out) + 3 H(+)(in). Na(+)/H(+) antiporter that extrudes sodium in exchange for external protons. The protein is Na(+)/H(+) antiporter NhaB of Shewanella halifaxensis (strain HAW-EB4).